Here is a 202-residue protein sequence, read N- to C-terminus: Large ribosomal subunit protein bL25 (202 aa).

This sequence belongs to the bacterial ribosomal protein bL25 family. CTC subfamily. Part of the 50S ribosomal subunit; part of the 5S rRNA/L5/L18/L25 subcomplex. Contacts the 5S rRNA. Binds to the 5S rRNA independently of L5 and L18.

Its function is as follows. This is one of the proteins that binds to the 5S RNA in the ribosome where it forms part of the central protuberance. This is Large ribosomal subunit protein bL25 from Methylococcus capsulatus (strain ATCC 33009 / NCIMB 11132 / Bath).